A 245-amino-acid polypeptide reads, in one-letter code: Eukaryotic translation initiation factor 6 (245 aa).

Tyr113 is modified (phosphotyrosine). Thr165 is modified (phosphothreonine). Phosphoserine is present on Ser166. Ser174 and Ser175 each carry phosphoserine; by CK1. Phosphoserine; by PKC is present on Ser235. Phosphoserine is present on residues Ser239 and Ser243.

Belongs to the eIF-6 family. Monomer. Associates with the 60S ribosomal subunit. Interacts with RACK1. Interacts with DICER1, AGO2, TARBP2, MOV10 and RPL7A; they form a large RNA-induced silencing complex (RISC). In terms of processing, phosphorylation at Ser-174 and Ser-175 by CSNK1D/CK1 promotes nuclear export. Ufmylated by UFL1. Expressed at very high levels in colon carcinoma with lower levels in normal colon and ileum and lowest levels in kidney and muscle (at protein level).

Its subcellular location is the cytoplasm. It localises to the nucleus. The protein localises to the nucleolus. Its function is as follows. Binds to the 60S ribosomal subunit and prevents its association with the 40S ribosomal subunit to form the 80S initiation complex in the cytoplasm. Behaves as a stimulatory translation initiation factor downstream insulin/growth factors. Is also involved in ribosome biogenesis. Associates with pre-60S subunits in the nucleus and is involved in its nuclear export. Cytoplasmic release of TIF6 from 60S subunits and nuclear relocalization is promoted by a RACK1 (RACK1)-dependent protein kinase C activity. In tissues responsive to insulin, controls fatty acid synthesis and glycolysis by exerting translational control of adipogenic transcription factors such as CEBPB, CEBPD and ATF4 that have G/C rich or uORF in their 5'UTR. Required for ROS-dependent megakaryocyte maturation and platelets formation, controls the expression of mitochondrial respiratory chain genes involved in reactive oxygen species (ROS) synthesis. Involved in miRNA-mediated gene silencing by the RNA-induced silencing complex (RISC). Required for both miRNA-mediated translational repression and miRNA-mediated cleavage of complementary mRNAs by RISC. Modulates cell cycle progression and global translation of pre-B cells, its activation seems to be rate-limiting in tumorigenesis and tumor growth. The sequence is that of Eukaryotic translation initiation factor 6 from Homo sapiens (Human).